The following is a 302-amino-acid chain: Oxygen-dependent coproporphyrinogen-III oxidase (302 aa).

Substrate is bound at residue serine 94. Positions 98 and 108 each coordinate a divalent metal cation. The Proton donor role is filled by histidine 108. 110-112 (NVR) is a binding site for substrate. The a divalent metal cation site is built by histidine 147 and histidine 177. The important for dimerization stretch occupies residues 242-277 (YVEFNLVYDRGTLFGLQTGGRTESILMSMPPLVRWQ). 260 to 262 (GGR) is a substrate binding site.

It belongs to the aerobic coproporphyrinogen-III oxidase family. In terms of assembly, homodimer. A divalent metal cation is required as a cofactor.

The protein resides in the cytoplasm. It catalyses the reaction coproporphyrinogen III + O2 + 2 H(+) = protoporphyrinogen IX + 2 CO2 + 2 H2O. It participates in porphyrin-containing compound metabolism; protoporphyrin-IX biosynthesis; protoporphyrinogen-IX from coproporphyrinogen-III (O2 route): step 1/1. In terms of biological role, involved in the heme biosynthesis. Catalyzes the aerobic oxidative decarboxylation of propionate groups of rings A and B of coproporphyrinogen-III to yield the vinyl groups in protoporphyrinogen-IX. This Shewanella oneidensis (strain ATCC 700550 / JCM 31522 / CIP 106686 / LMG 19005 / NCIMB 14063 / MR-1) protein is Oxygen-dependent coproporphyrinogen-III oxidase.